An 836-amino-acid polypeptide reads, in one-letter code: MSKLSFRARALDASKPLPVFRCEDLPDLHEYASINRAVPQMPTGMEKEEESEHHLQRAISAQQVYGEKRDNMVIPVPEAESNIAYYESIYPGEFKMPKQLIHIQPFSLDAEQPDYDLDSEDEVFVNKLKKKMDICPLQFEEMIDRLEKGSGQQPVSLQEAKLLLKEDDELIREVYEYWIKKRKNCRGPSLIPSVKQEKRDGSSTNDPYVAFRRRTEKMQTRKNRKNDEASYEKMLKLRRDLSRAVTILEMIKRREKSKRELLHLTLEIMEKRYNLGDYNGEIMSEVMAQRQPMKPTYAIPIIPITNSSQFKHQEAMDVKEFKVNKQDKADLIRPKRKYEKKPKVLPSSAAATPQQTSPAALPVFNAKDLNQYDFPSSDEEPLSQVLSGSSEAEEDNDPDGPFAFRRKAGCQYYAPHLDQTGNWPWTSPKDGGLGDVRYRYCLTTLTVPQRCIGFARRRVGRGGRVLLDRAHSDYDSVFHHLDLEMLSSPQHSPVNQFANTSETNTSDKSFSKDLSQILVNIKSCRWRHFRPRTPSLHDSDNDELSCRKLYRSINRTGTAQPGTQTCSTSTQSKSSSGSAHFAFTAEQYQQHQQQLALMQKQQLAQIQQQQANSNSSTNTSQNLASNQQKSGFRLNIQGLERTLQGFVSKTLDSASAQFAASALVTSEQLMGFKMKDDVVLGIGVNGVLPASGVYKGLHLSSTTPTALVHTSPSTAGSALLQPSNITQTSSSHSALSHQVTAANSATTQVLIGNNIRLTVPSSVATVNSIAPINARHIPRTLSAVPSSALKLAAAANCQVSKVPSSSSVDSVPRENHESEKPALNNIADNTVAMEVT.

Lys-319 participates in a covalent cross-link: Glycyl lysine isopeptide (Lys-Gly) (interchain with G-Cter in SUMO2). Disordered stretches follow at residues 335–360 and 372–401; these read KRKY…SPAA and YDFP…PDGP. A compositionally biased stretch (low complexity) spans 346–360; the sequence is PSSAAATPQQTSPAA. Ser-539 carries the post-translational modification Phosphoserine. Residue Lys-673 forms a Glycyl lysine isopeptide (Lys-Gly) (interchain with G-Cter in SUMO2) linkage. Residues 802 to 829 are disordered; it reads VPSSSSVDSVPRENHESEKPALNNIADN. Residues 811-820 show a composition bias toward basic and acidic residues; sequence VPRENHESEK.

The protein belongs to the enhancer of polycomb family. Component of the NuA4 histone acetyltransferase complex which contains the catalytic subunit KAT5/TIP60 and the subunits EP400, TRRAP/PAF400, BRD8/SMAP, EPC1, DMAP1/DNMAP1, RUVBL1/TIP49, RUVBL2, ING3, actin, ACTL6A/BAF53A, MORF4L1/MRG15, MORF4L2/MRGX, MRGBP, YEATS4/GAS41, VPS72/YL1 and MEAF6. KAT5/TIP60, EPC1, and ING3 together constitute a minimal HAT complex termed Piccolo NuA4. Component of a NuA4-related complex which contains EP400, TRRAP/PAF400, SRCAP, BRD8/SMAP, EPC1, DMAP1/DNMAP1, RUVBL1/TIP49, RUVBL2, actin, ACTL6A/BAF53A, VPS72 and YEATS4/GAS41. Interacts with TRIM27. Interacts with MBTD1; interaction is direct and promotes recruitment of MBTD1 into the NuA4 histone acetyltransferase complex.

The protein resides in the nucleus. It is found in the cytoplasm. Its function is as follows. Component of the NuA4 histone acetyltransferase (HAT) complex, a multiprotein complex involved in transcriptional activation of select genes principally by acetylation of nucleosomal histones H4 and H2A. The NuA4 complex plays a direct role in repair of DNA double-strand breaks (DSBs) by promoting homologous recombination (HR). The NuA4 complex is also required for spermatid development by promoting acetylation of histones: histone acetylation is required for histone replacement during the transition from round to elongating spermatids. In the NuA4 complex, EPC1 is required to recruit MBTD1 into the complex. The chain is Enhancer of polycomb homolog 1 from Homo sapiens (Human).